The primary structure comprises 404 residues: Multidrug resistance protein MdtG (404 aa).

11 helical membrane passes run L19–V39, L56–A76, L90–I110, A113–V133, T144–A164, P171–I191, L222–L242, I254–P274, I288–T308, F317–N337, and A376–L396.

It belongs to the major facilitator superfamily. DHA1 family. MdtG (TC 2.A.1.2.20) subfamily.

Its subcellular location is the cell inner membrane. In Salmonella choleraesuis (strain SC-B67), this protein is Multidrug resistance protein MdtG.